A 430-amino-acid polypeptide reads, in one-letter code: Dihydroorotase (430 aa).

Residues His-61 and His-63 each coordinate Zn(2+). Substrate is bound by residues His-63–Arg-65 and Asn-95. Zn(2+) contacts are provided by Asp-153, His-180, and His-233. Asn-279 lines the substrate pocket. Zn(2+) is bound at residue Asp-306. Residue Asp-306 is part of the active site. Substrate is bound by residues His-310 and Phe-324 to Gly-325.

It belongs to the metallo-dependent hydrolases superfamily. DHOase family. Class I DHOase subfamily. Zn(2+) is required as a cofactor.

The catalysed reaction is (S)-dihydroorotate + H2O = N-carbamoyl-L-aspartate + H(+). Its pathway is pyrimidine metabolism; UMP biosynthesis via de novo pathway; (S)-dihydroorotate from bicarbonate: step 3/3. Functionally, catalyzes the reversible cyclization of carbamoyl aspartate to dihydroorotate. The sequence is that of Dihydroorotase from Lactiplantibacillus plantarum (strain ATCC BAA-793 / NCIMB 8826 / WCFS1) (Lactobacillus plantarum).